Consider the following 1785-residue polypeptide: Brefeldin A-inhibited guanine nucleotide-exchange protein 2 (1785 aa).

Met1 is modified (N-acetylmethionine). The tract at residues 2–224 (QESQTKSMFV…KPQSPVIQAA (223 aa)) is DCB; DCB:DCB domain and DCB:HUS domain interaction. Phosphoserine is present on residues Ser214, Ser218, and Ser227. The segment at 232-285 (RLKHSQAQSKPTTPEKTDLTNGEHARSDSGKVSTENGDAPRERGSSLSGTDDGA) is disordered. Position 244 is a phosphothreonine (Thr244). Residues 244–260 (TPEKTDLTNGEHARSDS) are compositionally biased toward basic and acidic residues. A phosphoserine mark is found at Ser277, Ser348, and Ser349. The segment at 508-528 (ADAQCVVDIYVNYDCDLNAAN) is HUS; DCB:HUS domain interaction. At Ser614 the chain carries Phosphoserine. Thr616 carries the phosphothreonine modification. Ser617 carries the post-translational modification Phosphoserine. Residue Thr626 is modified to Phosphothreonine. One can recognise an SEC7 domain in the interval 654 to 785 (FNKKPKRGIQ…IIMLTTDLHS (132 aa)). Phosphoserine is present on residues Ser700, Ser1511, Ser1513, Ser1514, Ser1525, Ser1528, Ser1534, and Ser1782. Over residues 1514 to 1532 (SIDKNPSERGQSQLSNPTD) the composition is skewed to polar residues. A disordered region spans residues 1514-1535 (SIDKNPSERGQSQLSNPTDDSW).

Homodimer. Interacts with ARFGEF1/BIG1; both proteins are probably part of the same or very similar macromolecular complexes. Interacts with PRKAR1A, PRKAR2A, PRKAR1B, PRKAR2B, PPP1CC, PDE3A, TNFRSF1A, MYCBP and EXOC7. Interacts with GABRB1, GABRB2 and GABRB3. In terms of processing, in vitro phosphorylated by PKA reducing its GEF activity and dephosphorylated by phosphatase PP1. In terms of tissue distribution, expressed in placenta, lung, heart, brain, kidney and pancreas.

It localises to the cytoplasm. The protein localises to the membrane. Its subcellular location is the golgi apparatus. It is found in the perinuclear region. The protein resides in the trans-Golgi network. It localises to the endosome. The protein localises to the cytoskeleton. Its subcellular location is the microtubule organizing center. It is found in the centrosome. The protein resides in the cell projection. It localises to the dendrite. The protein localises to the cytoplasmic vesicle. Its subcellular location is the synapse. Inhibited by brefeldin A. Promotes guanine-nucleotide exchange on ARF1 and ARF3 and to a lower extent on ARF5 and ARF6. Promotes the activation of ARF1/ARF5/ARF6 through replacement of GDP with GTP. Involved in the regulation of Golgi vesicular transport. Required for the integrity of the endosomal compartment. Involved in trafficking from the trans-Golgi network (TGN) to endosomes and is required for membrane association of the AP-1 complex and GGA1. Seems to be involved in recycling of the transferrin receptor from recycling endosomes to the plasma membrane. Probably is involved in the exit of GABA(A) receptors from the endoplasmic reticulum. Involved in constitutive release of tumor necrosis factor receptor 1 via exosome-like vesicles; the function seems to involve PKA and specifically PRKAR2B. Proposed to act as A kinase-anchoring protein (AKAP) and may mediate crosstalk between Arf and PKA pathways. The polypeptide is Brefeldin A-inhibited guanine nucleotide-exchange protein 2 (ARFGEF2) (Homo sapiens (Human)).